Consider the following 86-residue polypeptide: Cell division topological specificity factor (86 aa).

The protein belongs to the MinE family.

Its function is as follows. Prevents the cell division inhibition by proteins MinC and MinD at internal division sites while permitting inhibition at polar sites. This ensures cell division at the proper site by restricting the formation of a division septum at the midpoint of the long axis of the cell. The polypeptide is Cell division topological specificity factor (Rhizobium johnstonii (strain DSM 114642 / LMG 32736 / 3841) (Rhizobium leguminosarum bv. viciae)).